Reading from the N-terminus, the 363-residue chain is Histidinol-phosphate aminotransferase (363 aa).

Position 218 is an N6-(pyridoxal phosphate)lysine (Lys-218).

The protein belongs to the class-II pyridoxal-phosphate-dependent aminotransferase family. Histidinol-phosphate aminotransferase subfamily. As to quaternary structure, homodimer. Requires pyridoxal 5'-phosphate as cofactor.

It carries out the reaction L-histidinol phosphate + 2-oxoglutarate = 3-(imidazol-4-yl)-2-oxopropyl phosphate + L-glutamate. The protein operates within amino-acid biosynthesis; L-histidine biosynthesis; L-histidine from 5-phospho-alpha-D-ribose 1-diphosphate: step 7/9. This chain is Histidinol-phosphate aminotransferase, found in Xanthomonas euvesicatoria pv. vesicatoria (strain 85-10) (Xanthomonas campestris pv. vesicatoria).